Consider the following 307-residue polypeptide: tRNA dimethylallyltransferase (307 aa).

9-16 contributes to the ATP binding site; sequence GPTAIGKT. 11–16 is a substrate binding site; it reads TAIGKT. Interaction with substrate tRNA regions lie at residues 34-37 and 164-168; these read DSRQ and QRMMR.

It belongs to the IPP transferase family. Monomer. Mg(2+) serves as cofactor.

The catalysed reaction is adenosine(37) in tRNA + dimethylallyl diphosphate = N(6)-dimethylallyladenosine(37) in tRNA + diphosphate. Its function is as follows. Catalyzes the transfer of a dimethylallyl group onto the adenine at position 37 in tRNAs that read codons beginning with uridine, leading to the formation of N6-(dimethylallyl)adenosine (i(6)A). The chain is tRNA dimethylallyltransferase from Flavobacterium psychrophilum (strain ATCC 49511 / DSM 21280 / CIP 103535 / JIP02/86).